A 599-amino-acid chain; its full sequence is Pentatricopeptide repeat-containing protein At3g62470, mitochondrial (599 aa).

A mitochondrion-targeting transit peptide spans 1–99 (MAAAPWLHLS…RGFSSGSSNV (99 aa)). 10 PPR repeats span residues 194–228 (DSRT…GLLT), 230–262 (ETFT…KFKI), 263–293 (GVET…LKER), 297–331 (NMMT…GLKP), 332–366 (DIVA…GPCP), 367–401 (NVRS…GLQP), 402–436 (DAAV…GHPP), 437–471 (DGKT…EIEP), 472–506 (SIHT…GICP), and 507–541 (DDNS…GMKT).

This sequence belongs to the PPR family. P subfamily.

Its subcellular location is the mitochondrion. The sequence is that of Pentatricopeptide repeat-containing protein At3g62470, mitochondrial from Arabidopsis thaliana (Mouse-ear cress).